The chain runs to 201 residues: Small ribosomal subunit protein uS4 (201 aa).

The region spanning 92 to 155 (RRLDAVVYAL…QKLDIIQESV (64 aa)) is the S4 RNA-binding domain.

The protein belongs to the universal ribosomal protein uS4 family. Part of the 30S ribosomal subunit. Contacts protein S5. The interaction surface between S4 and S5 is involved in control of translational fidelity.

Its function is as follows. One of the primary rRNA binding proteins, it binds directly to 16S rRNA where it nucleates assembly of the body of the 30S subunit. With S5 and S12 plays an important role in translational accuracy. This Staphylococcus carnosus (strain TM300) protein is Small ribosomal subunit protein uS4.